The primary structure comprises 157 residues: Large ribosomal subunit protein uL10 (157 aa).

The protein belongs to the universal ribosomal protein uL10 family. As to quaternary structure, part of the ribosomal stalk of the 50S ribosomal subunit. The N-terminus interacts with L11 and the large rRNA to form the base of the stalk. The C-terminus forms an elongated spine to which L12 dimers bind in a sequential fashion forming a multimeric L10(L12)X complex.

Its function is as follows. Forms part of the ribosomal stalk, playing a central role in the interaction of the ribosome with GTP-bound translation factors. The polypeptide is Large ribosomal subunit protein uL10 (Campylobacter hominis (strain ATCC BAA-381 / DSM 21671 / CCUG 45161 / LMG 19568 / NCTC 13146 / CH001A)).